The chain runs to 387 residues: Mannose-6-phosphate isomerase (387 aa).

It belongs to the N-acylglucosamine 2-epimerase family.

It carries out the reaction D-mannose 6-phosphate = D-fructose 6-phosphate. The sequence is that of Mannose-6-phosphate isomerase (pmi) from Rhizobium meliloti (strain 1021) (Ensifer meliloti).